Consider the following 325-residue polypeptide: ATP-dependent (S)-NAD(P)H-hydrate dehydratase (325 aa).

A YjeF C-terminal domain is found at 9–315 (LLKKVYNMVP…EHVHTAFLNV (307 aa)). (6S)-NADPHX is bound by residues G119 and 172 to 178 (NVVEFGR). ATP is bound by residues 211–215 (KGAKD) and 230–239 (GGLKRSGGQG). D240 is a (6S)-NADPHX binding site.

Belongs to the NnrD/CARKD family. The cofactor is Mg(2+).

The protein resides in the cytoplasm. The enzyme catalyses (6S)-NADHX + ATP = ADP + phosphate + NADH + H(+). It carries out the reaction (6S)-NADPHX + ATP = ADP + phosphate + NADPH + H(+). Its function is as follows. Catalyzes the dehydration of the S-form of NAD(P)HX at the expense of ATP, which is converted to ADP. Together with NAD(P)HX epimerase, which catalyzes the epimerization of the S- and R-forms, the enzyme allows the repair of both epimers of NAD(P)HX, a damaged form of NAD(P)H that is a result of enzymatic or heat-dependent hydration. This Phaeosphaeria nodorum (strain SN15 / ATCC MYA-4574 / FGSC 10173) (Glume blotch fungus) protein is ATP-dependent (S)-NAD(P)H-hydrate dehydratase.